The sequence spans 303 residues: Protein translocase subunit SecF (303 aa).

The next 6 membrane-spanning stretches (helical) occupy residues Ser-28–Ile-48, Ile-140–Val-160, Trp-164–Phe-184, Leu-194–Ile-214, Ile-246–Ala-266, and Val-272–Ile-292.

It belongs to the SecD/SecF family. SecF subfamily. Forms a complex with SecD. Part of the essential Sec protein translocation apparatus which comprises SecA, SecYEG and auxiliary proteins SecDF-YajC and YidC.

Its subcellular location is the cell inner membrane. Functionally, part of the Sec protein translocase complex. Interacts with the SecYEG preprotein conducting channel. SecDF uses the proton motive force (PMF) to complete protein translocation after the ATP-dependent function of SecA. The chain is Protein translocase subunit SecF from Rickettsia bellii (strain OSU 85-389).